Reading from the N-terminus, the 255-residue chain is tRNA (guanine-N(1)-)-methyltransferase (255 aa).

Residues G113 and 133–138 (IGDYVL) each bind S-adenosyl-L-methionine.

The protein belongs to the RNA methyltransferase TrmD family. Homodimer.

It localises to the cytoplasm. It carries out the reaction guanosine(37) in tRNA + S-adenosyl-L-methionine = N(1)-methylguanosine(37) in tRNA + S-adenosyl-L-homocysteine + H(+). Functionally, specifically methylates guanosine-37 in various tRNAs. The polypeptide is tRNA (guanine-N(1)-)-methyltransferase (Escherichia coli O127:H6 (strain E2348/69 / EPEC)).